Here is a 1495-residue protein sequence, read N- to C-terminus: Chromosome partition protein MukB (1495 aa).

Glycine 60–serine 67 is an ATP binding site. Coiled-coil stretches lie at residues arginine 322 to aspartate 693, glutamate 861 to serine 1140, and isoleucine 1233 to isoleucine 1289. Residues proline 692–arginine 809 form a flexible hinge region.

The protein belongs to the SMC family. MukB subfamily. Homodimerization via its hinge domain. Binds to DNA via its C-terminal region. Interacts, and probably forms a ternary complex, with MukE and MukF via its C-terminal region. The complex formation is stimulated by calcium or magnesium. Interacts with tubulin-related protein FtsZ.

The protein resides in the cytoplasm. The protein localises to the nucleoid. Its function is as follows. Plays a central role in chromosome condensation, segregation and cell cycle progression. Functions as a homodimer, which is essential for chromosome partition. Involved in negative DNA supercoiling in vivo, and by this means organize and compact chromosomes. May achieve or facilitate chromosome segregation by condensation DNA from both sides of a centrally located replisome during cell division. This Pasteurella multocida (strain Pm70) protein is Chromosome partition protein MukB.